Consider the following 146-residue polypeptide: Envelope protein OPG155 (146 aa).

A helical; Signal-anchor for type III membrane protein transmembrane segment spans residues 1–21 (MNSLSIFFIVVATAAVCLLFI). At 22-146 (QGYSIYENYG…AECQFLKSVL (125 aa)) the chain is on the intravirion side.

This sequence belongs to the orthopoxvirus OPG155 protein family. Part of a stable entry-fusion complex (EFC) which is at least composed of proteins OPG143, OPG147, OPG155, OPG086, OPG094, OPG107, OPG104, and OPG099. Formation of the viral membrane is necessary for the assembly of the complex. Interacts directly with protein OPG107. In terms of processing, contains two intramolecular disulfide bonds. They are created by the viral disulfide bond formation pathway, a poxvirus-specific pathway that operates on the cytoplasmic side of the MV membranes.

The protein resides in the virion membrane. Envelope protein required for virus entry into host cell and for cell-cell fusion (syncytium formation). In Vaccinia virus (strain Ankara) (VACV), this protein is Envelope protein OPG155 (OPG155).